The chain runs to 93 residues: Large ribosomal subunit protein uL23cz/uL23cy (93 aa).

Belongs to the universal ribosomal protein uL23 family. As to quaternary structure, part of the 50S ribosomal subunit.

Its subcellular location is the plastid. It is found in the chloroplast. Functionally, binds to 23S rRNA. The chain is Large ribosomal subunit protein uL23cz/uL23cy (rpl23-A) from Platanus occidentalis (Sycamore).